We begin with the raw amino-acid sequence, 156 residues long: Nucleosome assembly protein 1-like 5 (156 aa).

The span at M1–D16 shows a compositional bias: basic and acidic residues. The tract at residues M1–E58 is disordered. The segment covering A34–A49 has biased composition (low complexity). Positions V68 to K94 form a coiled coil. The interval T120 to K156 is disordered. The span at E122–A143 shows a compositional bias: acidic residues.

This sequence belongs to the nucleosome assembly protein (NAP) family.

It is found in the nucleus. This is Nucleosome assembly protein 1-like 5 (Nap1l5) from Mus musculus (Mouse).